We begin with the raw amino-acid sequence, 914 residues long: High affinity cAMP-specific and IBMX-insensitive 3',5'-cyclic phosphodiesterase 8 (914 aa).

Disordered stretches follow at residues 1-27 (MGCS…PLDA) and 113-138 (RRAT…HRKS). The segment covering 116-129 (TGSTGTSGTSSSGG) has biased composition (low complexity). A PAS domain is found at 312 to 359 (TQQALYTALHRLKEVVLITDDLLRIQYANRATERLLNMRLDEIISKQL). The PDEase domain occupies 558 to 893 (TAAIVPAKMK…SQWKKYDEQG (336 aa)). His-640 acts as the Proton donor in catalysis. Positions 644, 682, 683, and 799 each coordinate a divalent metal cation.

This sequence belongs to the cyclic nucleotide phosphodiesterase family. PDE8 subfamily. A divalent metal cation serves as cofactor. Expressed in Malpighian tubules and head.

It catalyses the reaction 3',5'-cyclic AMP + H2O = AMP + H(+). The protein operates within purine metabolism; 3',5'-cyclic AMP degradation; AMP from 3',5'-cyclic AMP: step 1/1. Functionally, hydrolyzes the second messenger cAMP, which is a key regulator of many important physiological processes. Involved in the positive regulation of MAP kinase signaling and in inhibiting oxidative stress-induced cell death. The sequence is that of High affinity cAMP-specific and IBMX-insensitive 3',5'-cyclic phosphodiesterase 8 from Drosophila melanogaster (Fruit fly).